Here is a 156-residue protein sequence, read N- to C-terminus: Small ribosomal subunit protein uS7 (156 aa).

Belongs to the universal ribosomal protein uS7 family. In terms of assembly, part of the 30S ribosomal subunit. Contacts proteins S9 and S11.

In terms of biological role, one of the primary rRNA binding proteins, it binds directly to 16S rRNA where it nucleates assembly of the head domain of the 30S subunit. Is located at the subunit interface close to the decoding center, probably blocks exit of the E-site tRNA. This Streptococcus sanguinis (strain SK36) protein is Small ribosomal subunit protein uS7.